The sequence spans 1293 residues: Enterobactin synthase component F (1293 aa).

Residues 1 to 301 (MSQHLPLVAA…NVLPLGIHIA (301 aa)) are elongation/condensation. The segment at 482–887 (SYREMREQVV…ALPDVEQAVT (406 aa)) is adenylatione. The region spanning 971-1046 (APKAGSETII…KLATIIDAEE (76 aa)) is the Carrier domain. At S1006 the chain carries O-(pantetheine 4'-phosphoryl)serine. Residues 1066-1293 (PTLFCFHPAS…GPIIRATLNR (228 aa)) are thioesterase. Catalysis depends on H1271, which acts as the Proton acceptor; for thioesterase activity.

It belongs to the ATP-dependent AMP-binding enzyme family. EntF subfamily. Proteins EntB, EntD, EntE and EntF are the component of the enterobactin synthase. Components probably do not form a stable complex. EntF acts as a catalytic monomer. Interacts with the MbtH-like protein YbdZ. YbdZ binds to the adenylation domain, but does not alter the structure of the domain. The cofactor is pantetheine 4'-phosphate. 4'-phosphopantetheine is transferred from CoA to a specific serine of apo-EntF by EntD. Holo-EntF so formed is then acylated with seryl-AMP.

It is found in the cytoplasm. The catalysed reaction is 3 2,3-dihydroxybenzoate + 3 L-serine + 6 ATP = enterobactin + 6 AMP + 6 diphosphate + 4 H(+). It catalyses the reaction holo-[peptidyl-carrier protein] + L-serine + ATP = L-seryl-[peptidyl-carrier protein] + AMP + diphosphate. It functions in the pathway siderophore biosynthesis; enterobactin biosynthesis. Adenylation activity is increased in the presence of the MbtH-like protein YbdZ. Its function is as follows. Involved in the biosynthesis of the siderophore enterobactin (enterochelin), which is a macrocyclic trimeric lactone of N-(2,3-dihydroxybenzoyl)-serine. EntF catalyzes the activation of L-serine via ATP-dependent PPi exchange reaction to form seryladenylate. Activated L-serine is loaded onto the peptidyl carrier domain via a thioester linkage to the phosphopanthetheine moiety, forming seryl-S-Ppant-EntF. EntF acts then as the sole catalyst for the formation of the three amide and three ester linkages found in enterobactin, using seryladenylate and 2,3-dihydroxybenzoate-S-Ppant-EntB (DHB-S-Ppant-EntB) as substrates, via the formation of a DHB-Ser-S-Ppant-EntF intermediate. This Escherichia coli (strain K12) protein is Enterobactin synthase component F.